The primary structure comprises 345 residues: Anthranilate phosphoribosyltransferase 1 (345 aa).

5-phospho-alpha-D-ribose 1-diphosphate-binding positions include glycine 86, 89–90 (GD), threonine 94, 96–99 (NIST), 114–122 (KHGGRGVSS), and serine 126. Position 86 (glycine 86) interacts with anthranilate. Residue serine 98 participates in Mg(2+) binding. Arginine 172 is an anthranilate binding site. Mg(2+)-binding residues include aspartate 231 and glutamate 232.

This sequence belongs to the anthranilate phosphoribosyltransferase family. As to quaternary structure, homodimer. Requires Mg(2+) as cofactor.

It catalyses the reaction N-(5-phospho-beta-D-ribosyl)anthranilate + diphosphate = 5-phospho-alpha-D-ribose 1-diphosphate + anthranilate. It participates in amino-acid biosynthesis; L-tryptophan biosynthesis; L-tryptophan from chorismate: step 2/5. Functionally, catalyzes the transfer of the phosphoribosyl group of 5-phosphorylribose-1-pyrophosphate (PRPP) to anthranilate to yield N-(5'-phosphoribosyl)-anthranilate (PRA). The protein is Anthranilate phosphoribosyltransferase 1 of Ralstonia nicotianae (strain ATCC BAA-1114 / GMI1000) (Ralstonia solanacearum).